We begin with the raw amino-acid sequence, 98 residues long: N(2)-fixation sustaining protein CowN (98 aa).

The protein belongs to the CowN family.

Its function is as follows. Is required to sustain N(2)-dependent growth in the presence of low levels of carbon monoxide (CO). Probably acts by protecting the N(2) fixation ability of the nitrogenase complex, which is inactivated in the presence of CO. The chain is N(2)-fixation sustaining protein CowN from Azospirillum sp. (strain B510).